Consider the following 63-residue polypeptide: Large ribosomal subunit protein uL30 (63 aa).

Belongs to the universal ribosomal protein uL30 family. In terms of assembly, part of the 50S ribosomal subunit.

The chain is Large ribosomal subunit protein uL30 from Methylobacterium sp. (strain 4-46).